Consider the following 581-residue polypeptide: Proline--tRNA ligase (581 aa).

This sequence belongs to the class-II aminoacyl-tRNA synthetase family. ProS type 1 subfamily. As to quaternary structure, homodimer.

It is found in the cytoplasm. The catalysed reaction is tRNA(Pro) + L-proline + ATP = L-prolyl-tRNA(Pro) + AMP + diphosphate. Functionally, catalyzes the attachment of proline to tRNA(Pro) in a two-step reaction: proline is first activated by ATP to form Pro-AMP and then transferred to the acceptor end of tRNA(Pro). As ProRS can inadvertently accommodate and process non-cognate amino acids such as alanine and cysteine, to avoid such errors it has two additional distinct editing activities against alanine. One activity is designated as 'pretransfer' editing and involves the tRNA(Pro)-independent hydrolysis of activated Ala-AMP. The other activity is designated 'posttransfer' editing and involves deacylation of mischarged Ala-tRNA(Pro). The misacylated Cys-tRNA(Pro) is not edited by ProRS. The sequence is that of Proline--tRNA ligase from Delftia acidovorans (strain DSM 14801 / SPH-1).